The chain runs to 419 residues: Putative BTB/POZ domain-containing protein L85 (419 aa).

Positions 16–89 (TDLTIVLKDD…FYDKTSTNSE (74 aa)) constitute a BTB domain. The disordered stretch occupies residues 250–290 (SSSNDSDEDASETESEHNSETESEHNSETESEHNSETESKH). A compositionally biased stretch (basic and acidic residues) spans 263–290 (ESEHNSETESEHNSETESEHNSETESKH).

This sequence belongs to the mimivirus BTB/WD family.

In Acanthamoeba polyphaga (Amoeba), this protein is Putative BTB/POZ domain-containing protein L85.